The primary structure comprises 299 residues: ATP phosphoribosyltransferase (299 aa).

The protein belongs to the ATP phosphoribosyltransferase family. Long subfamily. Mg(2+) is required as a cofactor.

It is found in the cytoplasm. The enzyme catalyses 1-(5-phospho-beta-D-ribosyl)-ATP + diphosphate = 5-phospho-alpha-D-ribose 1-diphosphate + ATP. The protein operates within amino-acid biosynthesis; L-histidine biosynthesis; L-histidine from 5-phospho-alpha-D-ribose 1-diphosphate: step 1/9. Feedback inhibited by histidine. In terms of biological role, catalyzes the condensation of ATP and 5-phosphoribose 1-diphosphate to form N'-(5'-phosphoribosyl)-ATP (PR-ATP). Has a crucial role in the pathway because the rate of histidine biosynthesis seems to be controlled primarily by regulation of HisG enzymatic activity. This is ATP phosphoribosyltransferase from Actinobacillus pleuropneumoniae serotype 7 (strain AP76).